Consider the following 234-residue polypeptide: MSKSFTFKQFHIDIGSCGMPVSTDGVLLGAWTNISECSQILDIGAGTGLLSLMSAQRNSNAHIDAIELMPIAAEVARLNFSQSPWKERLVLIHQDFLSYQTAYEYDAIICNPPYFNNGEQSLKGERSTARHTDSLPFDKLLQHCKTLISSTGRASFILPVFEGEIFIKIAKGCDFHLTKITKVKTTEKKSPTRLLIELSLFPHIYQESTLTIHDGNGYSDDFIKLTRMFYLNMG.

This sequence belongs to the methyltransferase superfamily. tRNA (adenine-N(6)-)-methyltransferase family.

Its subcellular location is the cytoplasm. It carries out the reaction adenosine(37) in tRNA1(Val) + S-adenosyl-L-methionine = N(6)-methyladenosine(37) in tRNA1(Val) + S-adenosyl-L-homocysteine + H(+). Its function is as follows. Specifically methylates the adenine in position 37 of tRNA(1)(Val) (anticodon cmo5UAC). In Aliivibrio fischeri (strain MJ11) (Vibrio fischeri), this protein is tRNA1(Val) (adenine(37)-N6)-methyltransferase.